A 417-amino-acid polypeptide reads, in one-letter code: Gamma-glutamyl phosphate reductase (417 aa).

Belongs to the gamma-glutamyl phosphate reductase family.

The protein resides in the cytoplasm. It catalyses the reaction L-glutamate 5-semialdehyde + phosphate + NADP(+) = L-glutamyl 5-phosphate + NADPH + H(+). Its pathway is amino-acid biosynthesis; L-proline biosynthesis; L-glutamate 5-semialdehyde from L-glutamate: step 2/2. Its function is as follows. Catalyzes the NADPH-dependent reduction of L-glutamate 5-phosphate into L-glutamate 5-semialdehyde and phosphate. The product spontaneously undergoes cyclization to form 1-pyrroline-5-carboxylate. This is Gamma-glutamyl phosphate reductase from Proteus mirabilis (strain HI4320).